Consider the following 254-residue polypeptide: Very-long-chain (3R)-3-hydroxyacyl-CoA dehydratase 2 (254 aa).

Residues 1–10 (MAAAAATAAT) are compositionally biased toward low complexity. Positions 1 to 34 (MAAAAATAATKGNGGGSGRVGAGDSSGARKKKGP) are disordered. The residue at position 2 (Ala2) is an N-acetylalanine. Residues 2–41 (AAAAATAATKGNGGGSGRVGAGDSSGARKKKGPGPVATAY) are Cytoplasmic-facing. Over residues 12 to 21 (GNGGGSGRVG) the composition is skewed to gly residues. Residues 42–60 (LVIYNVVMTAGWLVIAVGL) traverse the membrane as a helical segment. Over 61–79 (VRAYLAKGSYHSLYYSIER) the chain is Lumenal. The chain crosses the membrane as a helical span at residues 80–97 (PLKFFQTGALLEILHCAI). At 98-107 (GIVPSSVVLT) the chain is on the cytoplasmic side. A helical transmembrane segment spans residues 108–125 (SFQVMSRVFLIWAVTHSV). Topologically, residues 126–130 (KEVQS) are lumenal. The helical transmembrane segment at 131 to 146 (EDSVLLFVIAWTITEI) threads the bilayer. Residues 147 to 169 (IRYSFYTFSLLNHLPYIIKWARY) lie on the Cytoplasmic side of the membrane. The helical transmembrane segment at 170 to 187 (TLFIVLYPMGVTGELLTI) threads the bilayer. Residues Tyr176 and Glu183 contribute to the active site. The Lumenal portion of the chain corresponds to 188–217 (YAALPFVRQAGLYSISLPNKYNFSFDYHAF). The interval 198-214 (GLYSISLPNKYNFSFDY) is may be involved in interaction with TECR. N-linked (GlcNAc...) asparagine glycosylation occurs at Asn209. The chain crosses the membrane as a helical span at residues 218 to 235 (LILIMISYIPLFPQLYFH). At 236–254 (MIHQRRKVLSHTEEHKKFE) the chain is on the cytoplasmic side.

Belongs to the very long-chain fatty acids dehydratase HACD family. May interact with enzymes of the ELO family (including ELOVL1); with those enzymes that mediate condensation, the first of the four steps of the reaction cycle responsible for fatty acids elongation, may be part of a larger fatty acids elongase complex. Interacts with BCAP31. Interacts with TECR.

It localises to the endoplasmic reticulum membrane. It catalyses the reaction a very-long-chain (3R)-3-hydroxyacyl-CoA = a very-long-chain (2E)-enoyl-CoA + H2O. It carries out the reaction (3R)-hydroxyhexadecanoyl-CoA = (2E)-hexadecenoyl-CoA + H2O. The catalysed reaction is (3R)-hydroxyoctadecanoyl-CoA = (2E)-octadecenoyl-CoA + H2O. The enzyme catalyses (3R)-hydroxyeicosanoyl-CoA = (2E)-eicosenoyl-CoA + H2O. It catalyses the reaction (3R)-hydroxydocosanoyl-CoA = (2E)-docosenoyl-CoA + H2O. It carries out the reaction (3R)-hydroxytetracosanoyl-CoA = (2E)-tetracosenoyl-CoA + H2O. The catalysed reaction is (3R)-hydroxyhexacosanoyl-CoA = (2E)-hexacosenoyl-CoA + H2O. It functions in the pathway lipid metabolism; fatty acid biosynthesis. Catalyzes the third of the very long-chain fatty acids (VLCFA) elongation four-step cycle (condensation, reduction, dehydration, and reduction). This endoplasmic reticulum-elongation process is characterized by the addition of two carbons to the lipid chain through each cycle. This enzyme catalyzes the dehydration of the 3-hydroxyacyl-CoA intermediate into trans-2,3-enoyl-CoA, within each cycle of elongation. Therefore, it participates in the production of various VLCFAs involved in multiple biological processes as precursors of membrane lipids and lipid mediators. This chain is Very-long-chain (3R)-3-hydroxyacyl-CoA dehydratase 2, found in Mus musculus (Mouse).